The sequence spans 485 residues: uncharacterized protein (485 aa).

Transmembrane regions (helical) follow at residues 284–304, 328–348, and 353–373; these read LLAL…YPLF, LLDL…SFIK, and LALT…YNCL.

This sequence belongs to the CBF/MAK21 family.

It is found in the membrane. This is an uncharacterized protein from Schizosaccharomyces pombe (strain 972 / ATCC 24843) (Fission yeast).